Consider the following 82-residue polypeptide: Putative antitoxin Saci_0468 (82 aa).

The protein belongs to the UPF0330 family.

In terms of biological role, possibly the antitoxin component of a type II toxin-antitoxin (TA) system. The chain is Putative antitoxin Saci_0468 from Sulfolobus acidocaldarius (strain ATCC 33909 / DSM 639 / JCM 8929 / NBRC 15157 / NCIMB 11770).